A 299-amino-acid chain; its full sequence is MSLSNLPTEMVNPKTRNLDARDTFEILKLINEEDALVALAIREVLTEIDKVVQMCINCLEKNGRVFYVGAGTSGRVAYVDAVELIPTYSLQEGVFIPIIAGGTQALGKSVEGVEDDEEGGKNDLFSYKPSEKDVVIGIAASGRTPYVAGALRYAKQCGCKTALICNVRKPLLAEYADVVIAAETGPEVVAGSTRMKAGTAQKMILNMISTTVMVKMGKVYDNLMVDVMVLNEKLRERAQNIVTHITGVDKQTAEIYLKKADYNVKVAVLMILSKNDVEECRKILQDQSNLRKALQIAVR.

Residues 55–218 (CINCLEKNGR…STTVMVKMGK (164 aa)) form the SIS domain. The active-site Proton donor is the E83. E114 is an active-site residue.

Belongs to the GCKR-like family. MurNAc-6-P etherase subfamily. As to quaternary structure, homodimer.

It carries out the reaction N-acetyl-D-muramate 6-phosphate + H2O = N-acetyl-D-glucosamine 6-phosphate + (R)-lactate. The protein operates within amino-sugar metabolism; N-acetylmuramate degradation. Its function is as follows. Specifically catalyzes the cleavage of the D-lactyl ether substituent of MurNAc 6-phosphate, producing GlcNAc 6-phosphate and D-lactate. The sequence is that of N-acetylmuramic acid 6-phosphate etherase from Pseudothermotoga lettingae (strain ATCC BAA-301 / DSM 14385 / NBRC 107922 / TMO) (Thermotoga lettingae).